The primary structure comprises 370 residues: 2-Hydroxyacid oxidase 1 (370 aa).

The region spanning 1 to 365 (MLPRLICIND…DKTLVRKNPL (365 aa)) is the FMN hydroxy acid dehydrogenase domain. Tyr26 serves as a coordination point for glyoxylate. FMN-binding positions include 79-81 (ATA), Ser108, and Gln130. Tyr132 contributes to the glyoxylate binding site. An FMN-binding site is contributed by Thr158. Residue Arg167 coordinates glyoxylate. Lys184 bears the N6-succinyllysine mark. A phosphoserine mark is found at Ser194 and Ser230. FMN-binding residues include Lys236 and Ser258. Positions 260 and 263 each coordinate glyoxylate. Residue His260 is the Proton acceptor of the active site. Residues 291–295 (DGGVR) and 314–315 (GR) each bind FMN. A Microbody targeting signal motif is present at residues 368 to 370 (SKI).

Belongs to the FMN-dependent alpha-hydroxy acid dehydrogenase family. In terms of assembly, homotetramer. The cofactor is FMN. Highly expressed in liver.

The protein resides in the peroxisome matrix. The catalysed reaction is a (2S)-2-hydroxycarboxylate + O2 = a 2-oxocarboxylate + H2O2. It catalyses the reaction glycolate + O2 = glyoxylate + H2O2. The enzyme catalyses glyoxylate + O2 + H2O = oxalate + H2O2 + H(+). It carries out the reaction 2-hydroxyhexadecanoate + O2 = 2-oxohexadecanoate + H2O2. The catalysed reaction is 2-hydroxyoctanoate + O2 = 2-oxooctanoate + H2O2. It functions in the pathway amino-acid biosynthesis; glycine biosynthesis. Its activity is regulated as follows. Inhibited by its product oxalate. Inhibited by high concentrations of dichlorophenolindophenol (DCIP) in vitro. Broad substrate specificity (S)-2-hydroxy-acid oxidase that preferentially oxidizes glycolate. The glyoxylate produced by the oxidation of glycolate can then be utilized by alanine-glyoxylate aminotransferase for the peroxisomal synthesis of glycine; this pathway appears to be an important step for the detoxification of glyoxylate which, if allowed to accumulate, may be metabolized to oxalate with formation of kidney stones. Can also catalyze the oxidation of glyoxylate, and long chain hydroxyacids such as 2-hydroxyhexadecanoate and 2-hydroxyoctanoate, albeit with much lower catalytic efficiency. Active in vitro with the artificial electron acceptor 2,6-dichlorophenolindophenol (DCIP), but O2 is believed to be the physiological electron acceptor, leading to the production of H2O2. Is not active on L-lactate and 2-hydroxybutanoate. The protein is 2-Hydroxyacid oxidase 1 of Homo sapiens (Human).